An 88-amino-acid chain; its full sequence is Ribonuclease P protein component 1 (88 aa).

The protein belongs to the eukaryotic/archaeal RNase P protein component 1 family. In terms of assembly, consists of a catalytic RNA component and at least 4-5 protein subunits.

The protein localises to the cytoplasm. It catalyses the reaction Endonucleolytic cleavage of RNA, removing 5'-extranucleotides from tRNA precursor.. Part of ribonuclease P, a protein complex that generates mature tRNA molecules by cleaving their 5'-ends. This chain is Ribonuclease P protein component 1, found in Nitrosopumilus maritimus (strain SCM1).